Reading from the N-terminus, the 215-residue chain is uncharacterized protein (215 aa).

A run of 2 helical transmembrane segments spans residues 40–60 (VLFPIPVFCSIKVLLDYFCSL) and 72–92 (LIWFYVLSVILCKSLFAVGYL).

It is found in the mitochondrion membrane. This is an uncharacterized protein from Arabidopsis thaliana (Mouse-ear cress).